Consider the following 392-residue polypeptide: Anhydro-N-acetylmuramic acid kinase (392 aa).

Residue 22–29 (GTSMDGVD) coordinates ATP.

This sequence belongs to the anhydro-N-acetylmuramic acid kinase family.

The enzyme catalyses 1,6-anhydro-N-acetyl-beta-muramate + ATP + H2O = N-acetyl-D-muramate 6-phosphate + ADP + H(+). Its pathway is amino-sugar metabolism; 1,6-anhydro-N-acetylmuramate degradation. The protein operates within cell wall biogenesis; peptidoglycan recycling. Catalyzes the specific phosphorylation of 1,6-anhydro-N-acetylmuramic acid (anhMurNAc) with the simultaneous cleavage of the 1,6-anhydro ring, generating MurNAc-6-P. Is required for the utilization of anhMurNAc either imported from the medium or derived from its own cell wall murein, and thus plays a role in cell wall recycling. The sequence is that of Anhydro-N-acetylmuramic acid kinase from Burkholderia pseudomallei (strain 1106a).